Reading from the N-terminus, the 385-residue chain is Transcription termination factor 2, mitochondrial (385 aa).

The N-terminal 35 residues, 1-35 (MPWRLPTGHQLCRLCLLRKPRPALKIKPSSACVTY), are a transit peptide targeting the mitochondrion.

Belongs to the mTERF family. Monomer.

The protein localises to the mitochondrion matrix. It is found in the mitochondrion nucleoid. Binds mitochondrial DNA and plays a role in the regulation of transcription of mitochondrial mRNA and rRNA species. The protein is Transcription termination factor 2, mitochondrial (Mterf2) of Mus musculus (Mouse).